The sequence spans 1293 residues: Phosphoribosylformylglycinamidine synthase (1293 aa).

ATP contacts are provided by residues 305 to 316 (GAATGSGGEIRD) and Ala-676. Residues 305-328 (GAATGSGGEIRDEGATGRGSKPKA) form a disordered region. The Mg(2+) site is built by Asp-677, Glu-716, Asn-720, and Asp-884. Position 886 (Ser-886) interacts with ATP. Residues 1040-1293 (MAILREQGVN…MFRNARVNLG (254 aa)) enclose the Glutamine amidotransferase type-1 domain. The active-site Nucleophile is the Cys-1133. Residues His-1258 and Glu-1260 contribute to the active site.

This sequence in the N-terminal section; belongs to the FGAMS family. In terms of assembly, monomer.

The protein localises to the cytoplasm. The enzyme catalyses N(2)-formyl-N(1)-(5-phospho-beta-D-ribosyl)glycinamide + L-glutamine + ATP + H2O = 2-formamido-N(1)-(5-O-phospho-beta-D-ribosyl)acetamidine + L-glutamate + ADP + phosphate + H(+). It functions in the pathway purine metabolism; IMP biosynthesis via de novo pathway; 5-amino-1-(5-phospho-D-ribosyl)imidazole from N(2)-formyl-N(1)-(5-phospho-D-ribosyl)glycinamide: step 1/2. Phosphoribosylformylglycinamidine synthase involved in the purines biosynthetic pathway. Catalyzes the ATP-dependent conversion of formylglycinamide ribonucleotide (FGAR) and glutamine to yield formylglycinamidine ribonucleotide (FGAM) and glutamate. In Shewanella sp. (strain MR-7), this protein is Phosphoribosylformylglycinamidine synthase.